The primary structure comprises 363 residues: Flagellar P-ring protein (363 aa).

The first 20 residues, 1–20 (MKYKLVLAVAVLVFSLPSQA), serve as a signal peptide directing secretion.

Belongs to the FlgI family. As to quaternary structure, the basal body constitutes a major portion of the flagellar organelle and consists of four rings (L,P,S, and M) mounted on a central rod.

Its subcellular location is the periplasm. The protein localises to the bacterial flagellum basal body. Functionally, assembles around the rod to form the L-ring and probably protects the motor/basal body from shearing forces during rotation. The chain is Flagellar P-ring protein from Shewanella baltica (strain OS223).